The sequence spans 1060 residues: Bumetanide-sensitive sodium-(potassium)-chloride cotransporter (1060 aa).

At 1–122 the chain is on the cytoplasmic side; sequence MNDENRFNVS…KSPTPAVGIK (122 aa). The next 2 membrane-spanning stretches (helical) occupy residues 123–143 and 154–174; these read LGWI…VMLF and GIGL…ITTL. At 175-197 the chain is on the cytoplasmic side; that stretch reads SMSAICTNGEVKGGGIYYIISRS. A run of 2 helical transmembrane segments spans residues 198 to 218 and 250 to 270; these read LGPE…AVAA and IVGT…MDWE. Topologically, residues 271–275 are cytoplasmic; the sequence is SKAQN. Transmembrane regions (helical) follow at residues 276 to 296 and 332 to 352; these read FLIA…IMGP and FFSV…GANI. Topologically, residues 353-367 are cytoplasmic; sequence SGDLKDPASAIPKGT. Residues 368–388 traverse the membrane as a helical segment; that stretch reads LLALLISMVSYTLMVLFAGGG. N-linked (GlcNAc...) asparagine glycans are attached at residues Asn-396, Asn-404, and Asn-419. The helical transmembrane segment at 432–452 threads the bilayer; the sequence is VMQLMSAWGPFIYGGCWAATL. Over 453–497 the chain is Cytoplasmic; the sequence is STALTNLLSVPRLIQALGVDRIYPGLIFFSKPYGRHGEPYRGYVL. Helical transmembrane passes span 498-518 and 563-583; these read TFFV…APLI and CVAI…AIFF. Residues 584 to 642 lie on the Cytoplasmic side of the membrane; the sequence is TLYLIVHYRRPDVNWGSSTQAQMYKTALSSAHALARTGEHVKNYWPQLLVLAGRPQARP. A helical membrane pass occupies residues 643–663; it reads ALVDLGNLISKAGSLMIVGDI. Asn-816 carries an N-linked (GlcNAc...) asparagine glycan. Residues 882 to 902 form a helical membrane-spanning segment; that stretch reads TLDVWWLYDDGGLTILLPYII. Residues 903 to 1060 lie on the Cytoplasmic side of the membrane; sequence SQRSAWANCK…NHTSVLTFYS (158 aa).

It belongs to the SLC12A transporter family.

The protein localises to the membrane. In terms of biological role, electrically silent transporter system. Mediates sodium and chloride reabsorption. Plays a vital role in the regulation of ionic balance and cell volume. This Manduca sexta (Tobacco hawkmoth) protein is Bumetanide-sensitive sodium-(potassium)-chloride cotransporter.